The primary structure comprises 70 residues: MAVPKRKTTPSRRGMRRSHQALGVEAHAECSNCGEMKRPHHVCSHCGHYDGREVVAAGNSGKGLKTAVRA.

Over residues 1-19 (MAVPKRKTTPSRRGMRRSH) the composition is skewed to basic residues. The tract at residues 1 to 21 (MAVPKRKTTPSRRGMRRSHQA) is disordered.

It belongs to the bacterial ribosomal protein bL32 family.

The sequence is that of Large ribosomal subunit protein bL32 from Gluconobacter oxydans (strain 621H) (Gluconobacter suboxydans).